Reading from the N-terminus, the 203-residue chain is uncharacterized protein (203 aa).

The helical transmembrane segment at 180-200 (VYLLLFGIPLLILIFLIIFFI) threads the bilayer.

It localises to the virion. The protein resides in the host membrane. This is an uncharacterized protein from Acanthamoeba polyphaga (Amoeba).